A 408-amino-acid polypeptide reads, in one-letter code: Imidazolonepropionase (408 aa).

The Fe(3+) site is built by His-73 and His-75. The Zn(2+) site is built by His-73 and His-75. The 4-imidazolone-5-propanoate site is built by Arg-82, Tyr-145, and His-178. Tyr-145 is an N-formimidoyl-L-glutamate binding site. Fe(3+) is bound at residue His-243. Residue His-243 coordinates Zn(2+). Gln-246 lines the 4-imidazolone-5-propanoate pocket. A Fe(3+)-binding site is contributed by Asp-318. Asp-318 contributes to the Zn(2+) binding site. The N-formimidoyl-L-glutamate site is built by Asn-320 and Gly-322. Ser-323 serves as a coordination point for 4-imidazolone-5-propanoate.

The protein belongs to the metallo-dependent hydrolases superfamily. HutI family. The cofactor is Zn(2+). It depends on Fe(3+) as a cofactor.

Its subcellular location is the cytoplasm. The catalysed reaction is 4-imidazolone-5-propanoate + H2O = N-formimidoyl-L-glutamate. The protein operates within amino-acid degradation; L-histidine degradation into L-glutamate; N-formimidoyl-L-glutamate from L-histidine: step 3/3. Its function is as follows. Catalyzes the hydrolytic cleavage of the carbon-nitrogen bond in imidazolone-5-propanoate to yield N-formimidoyl-L-glutamate. It is the third step in the universal histidine degradation pathway. This chain is Imidazolonepropionase, found in Shewanella putrefaciens (strain CN-32 / ATCC BAA-453).